An 805-amino-acid polypeptide reads, in one-letter code: Leucine--tRNA ligase (805 aa).

The 'HIGH' region signature appears at 40-51 (PYPSGAGLHVGH). The short motif at 576–580 (KMSKS) is the 'KMSKS' region element. Residue lysine 579 coordinates ATP.

It belongs to the class-I aminoacyl-tRNA synthetase family.

The protein localises to the cytoplasm. The enzyme catalyses tRNA(Leu) + L-leucine + ATP = L-leucyl-tRNA(Leu) + AMP + diphosphate. The sequence is that of Leucine--tRNA ligase from Geobacillus kaustophilus (strain HTA426).